A 367-amino-acid polypeptide reads, in one-letter code: Aminomethyltransferase (367 aa).

This sequence belongs to the GcvT family. The glycine cleavage system is composed of four proteins: P, T, L and H.

The catalysed reaction is N(6)-[(R)-S(8)-aminomethyldihydrolipoyl]-L-lysyl-[protein] + (6S)-5,6,7,8-tetrahydrofolate = N(6)-[(R)-dihydrolipoyl]-L-lysyl-[protein] + (6R)-5,10-methylene-5,6,7,8-tetrahydrofolate + NH4(+). In terms of biological role, the glycine cleavage system catalyzes the degradation of glycine. This is Aminomethyltransferase from Lysinibacillus sphaericus (strain C3-41).